A 118-amino-acid polypeptide reads, in one-letter code: Ribulose bisphosphate carboxylase small subunit 2 (118 aa).

It belongs to the RuBisCO small chain family. Heterohexadecamer of 8 large and 8 small subunits.

Functionally, ruBisCO catalyzes two reactions: the carboxylation of D-ribulose 1,5-bisphosphate, the primary event in carbon dioxide fixation, as well as the oxidative fragmentation of the pentose substrate. Both reactions occur simultaneously and in competition at the same active site. Although the small subunit is not catalytic it is essential for maximal activity. The sequence is that of Ribulose bisphosphate carboxylase small subunit 2 from Acidithiobacillus ferrooxidans (Thiobacillus ferrooxidans).